The following is a 451-amino-acid chain: uncharacterized protein (451 aa).

A TRAM domain is found at 1-59; the sequence is MLHKNDIIETEISDISHEGMGIAKVDGFVFFVENALPGEIIKMRVLKLRKRIGYGKVEE. S-adenosyl-L-methionine contacts are provided by Q283, Y312, E333, and D381. C408 functions as the Nucleophile in the catalytic mechanism.

The protein belongs to the class I-like SAM-binding methyltransferase superfamily. RNA M5U methyltransferase family.

This is an uncharacterized protein from Streptococcus agalactiae serotype V (strain ATCC BAA-611 / 2603 V/R).